The following is a 289-amino-acid chain: MVGVKPVGSDPDFQPELSGAGSRLAVVKFTMRGCGPCLRIAPAFSSMSNKYPQAVFLEVDVHQCQGTAATNNISATPTFLFFRNKVRIDQYQGADAVGLEEKIKQHLENDPGSNEDTDIPKGYMDLMPFINKAGCECLNESDEHGFDNCLRKDLSFLESDCDEQLLITVAFNQPVKLYSMKFQGPDNGQGPKYVKIFINLPRSMDFEEAERSEPTQALELTEDDIKEDGIVPLRYVKFQNVNSVTLFVQSNQGEEETTRISYFTFIGTPVQATNMNDFKRVVGKKGESH.

The region spanning 2 to 109 (VGVKPVGSDP…EEKIKQHLEN (108 aa)) is the Thioredoxin domain. Residues C34 and C37 are joined by a disulfide bond. S113 is modified (phosphoserine). The PITH domain maps to 115–285 (EDTDIPKGYM…NDFKRVVGKK (171 aa)).

As to quaternary structure, component of the 19S regulatory cap of the 26S proteasome. Interacts with PSMD14/RPN11. Interacts with, and reduces EEF1A1.

Its subcellular location is the cytoplasm. It is found in the nucleus. Functionally, active thioredoxin with a redox potential of about -250 mV. The chain is Thioredoxin-like protein 1 (Txnl1) from Rattus norvegicus (Rat).